A 683-amino-acid polypeptide reads, in one-letter code: MGGLQNVRSAALIGHNGSGKSLLLAQILYKSGLIDKADTKYVDYDPVEEEKGASFSSHVASLEWKGKKVYLIDTPGFSDFISEVINGIFVSENIISVVNAVAGVEIQTERTWNMADEMKKPIIVFVNQMDKERANFENVVAELKERFSRKIVPVVVPIGAAENFEGVVDLLKKKAYRYDGDKVQEEDMPESFNDMRSEILEDIVEQDEELMMRYLDGEDIGYDELMRVLKEGYKKGEIVPVLSGSALKGIGLDLLLDYLGDIGVSPEEAPSYKALLEDGTEIEVKFSEEEPFCAYIFKSVVDQFVGRITFAKVIAGVLRPGDTVVNVQKDVTEKVGHVYVPILKQQKEVESAGPGEIVVLLKLKEGAVGETLAHRDRRVKIVPPAFPEPMFSRSVHPKSKSDIDKISSGLSRLSDSDPTFVWEYDPETGETVVSGLGAMHLDVMIERLKKIFGVDVEVGKPKIAYRETITTTAVAEHKHKKQTGGHGQYGHVKIQLEPLPRGQGYEFVDKIVGGVIPRNFIPSVDKGIREAMKKGVLAGYPVTDVRVILFDGSYHEVDSSDISFQIAAIQAFKKGMEAAKPVILEPIMEVEVFVPEENAGDVMGEISSRRGRPLGMEPSGKGMVKVKAEVPLAEMLDFSSKLSSITSGRGYFTMRFQRYEIVPPNIQEKIIEERRREMQEQEK.

In terms of domain architecture, tr-type G spans Q5–E267. GTP-binding positions include G14–S21, D73–F77, and N127–D130.

It belongs to the TRAFAC class translation factor GTPase superfamily. Classic translation factor GTPase family. EF-G/EF-2 subfamily.

The polypeptide is Elongation factor G-like protein (Thermotoga maritima (strain ATCC 43589 / DSM 3109 / JCM 10099 / NBRC 100826 / MSB8)).